Reading from the N-terminus, the 182-residue chain is Large ribosomal subunit protein bL19m (182 aa).

A mitochondrion-targeting transit peptide spans 1–21 (MFNAKHFFNLGLGFQWLQKRG).

It belongs to the bacterial ribosomal protein bL19 family. As to quaternary structure, component of the mitochondrial large ribosomal subunit (mt-LSU). Mature yeast 74S mitochondrial ribosomes consist of a small (37S) and a large (54S) subunit. The 37S small subunit contains a 15S ribosomal RNA (15S mt-rRNA) and at least 32 different proteins. The 54S large subunit contains a 21S rRNA (21S mt-rRNA) and at least 45 different proteins.

It is found in the mitochondrion. In terms of biological role, component of the mitochondrial ribosome (mitoribosome), a dedicated translation machinery responsible for the synthesis of mitochondrial genome-encoded proteins, including at least some of the essential transmembrane subunits of the mitochondrial respiratory chain. The mitoribosomes are attached to the mitochondrial inner membrane and translation products are cotranslationally integrated into the membrane. bL19m is essential for respiration. In Schizosaccharomyces pombe (strain 972 / ATCC 24843) (Fission yeast), this protein is Large ribosomal subunit protein bL19m (img1).